A 330-amino-acid chain; its full sequence is GTP 3',8-cyclase (330 aa).

Residues 14 to 225 (RFGRTVDYVR…RERLADAYPE (212 aa)) form the Radical SAM core domain. Arg23 is a GTP binding site. [4Fe-4S] cluster-binding residues include Cys30 and Cys34. Tyr36 is a binding site for S-adenosyl-L-methionine. Position 37 (Cys37) interacts with [4Fe-4S] cluster. Arg70 is a GTP binding site. Gly74 lines the S-adenosyl-L-methionine pocket. A GTP-binding site is contributed by Thr101. Ser125 is an S-adenosyl-L-methionine binding site. Residue Lys162 participates in GTP binding. 2 residues coordinate [4Fe-4S] cluster: Cys259 and Cys262. Position 264–266 (264–266 (KLR)) interacts with GTP. Residue Cys276 coordinates [4Fe-4S] cluster. Residues 309–318 (KPKDGLKSSH) show a composition bias toward basic and acidic residues. A disordered region spans residues 309-330 (KPKDGLKSSHDTAASSMSQIGG). Polar residues predominate over residues 319–330 (DTAASSMSQIGG).

This sequence belongs to the radical SAM superfamily. MoaA family. In terms of assembly, monomer and homodimer. [4Fe-4S] cluster is required as a cofactor.

It carries out the reaction GTP + AH2 + S-adenosyl-L-methionine = (8S)-3',8-cyclo-7,8-dihydroguanosine 5'-triphosphate + 5'-deoxyadenosine + L-methionine + A + H(+). It participates in cofactor biosynthesis; molybdopterin biosynthesis. In terms of biological role, catalyzes the cyclization of GTP to (8S)-3',8-cyclo-7,8-dihydroguanosine 5'-triphosphate. The chain is GTP 3',8-cyclase from Chlorobaculum tepidum (strain ATCC 49652 / DSM 12025 / NBRC 103806 / TLS) (Chlorobium tepidum).